The primary structure comprises 541 residues: Membrane protein insertase YidC (541 aa).

Transmembrane regions (helical) follow at residues 7–27, 346–368, 416–436, 454–474, and 495–515; these read LLVI…QLDY, IVQN…LYPL, LGGC…YWTF, LSAQ…MFLL, and PLIF…YWLV.

This sequence belongs to the OXA1/ALB3/YidC family. Type 1 subfamily. As to quaternary structure, interacts with the Sec translocase complex via SecD. Specifically interacts with transmembrane segments of nascent integral membrane proteins during membrane integration.

The protein resides in the cell inner membrane. In terms of biological role, required for the insertion and/or proper folding and/or complex formation of integral membrane proteins into the membrane. Involved in integration of membrane proteins that insert both dependently and independently of the Sec translocase complex, as well as at least some lipoproteins. Aids folding of multispanning membrane proteins. This Pasteurella multocida (strain Pm70) protein is Membrane protein insertase YidC.